Reading from the N-terminus, the 45-residue chain is Large ribosomal subunit protein bL34 (45 aa).

This sequence belongs to the bacterial ribosomal protein bL34 family.

The protein is Large ribosomal subunit protein bL34 of Opitutus terrae (strain DSM 11246 / JCM 15787 / PB90-1).